The following is a 244-amino-acid chain: 5'-nucleotidase SurE (244 aa).

Positions 8, 9, 39, and 96 each coordinate a divalent metal cation.

The protein belongs to the SurE nucleotidase family. It depends on a divalent metal cation as a cofactor.

Its subcellular location is the cytoplasm. The enzyme catalyses a ribonucleoside 5'-phosphate + H2O = a ribonucleoside + phosphate. Nucleotidase that shows phosphatase activity on nucleoside 5'-monophosphates. The chain is 5'-nucleotidase SurE from Thermus thermophilus (strain ATCC 27634 / DSM 579 / HB8).